We begin with the raw amino-acid sequence, 150 residues long: Kirola (150 aa).

Residue methionine 1 is modified to N-acetylmethionine.

This sequence belongs to the MLP family. Monomer. In terms of processing, the N-terminus is blocked.

This chain is Kirola, found in Actinidia deliciosa (Kiwi).